The chain runs to 700 residues: Interleukin-1 receptor accessory protein-like 1-B (700 aa).

An N-terminal signal peptide occupies residues 1 to 18 (MRSRVPLQILLYAAVIRS). Residues 19 to 357 (LKVVSKRGSV…QLSRRELMYT (339 aa)) are Extracellular-facing. Residues 32–134 (TDWSVDYLRY…YCMKVSMALT (103 aa)) form the Ig-like C2-type 1 domain. Cys53 and Cys118 are disulfide-bonded. Asn63, Asn122, Asn138, Asn213, Asn264, and Asn331 each carry an N-linked (GlcNAc...) asparagine glycan. Ig-like C2-type domains follow at residues 143–232 (CYNS…TELT) and 242–350 (PKIL…IQLS). Cys164 and Cys216 are oxidised to a cystine. A disulfide bond links Cys267 and Cys334. Residues 358–378 (VELAGGLGAILLMLIFLVSLY) traverse the membrane as a helical segment. The Cytoplasmic segment spans residues 379–700 (KCYRIELMLF…RETSISSVIW (322 aa)). Residues 403 to 559 (KDYDAYVSYT…RFWKQLQYEM (157 aa)) enclose the TIR domain. Residue Glu491 is part of the active site. Positions 564–700 (PEPKLSHEQV…RETSISSVIW (137 aa)) are required for synaptic vesicle accumulation during synaptogenesis.

The protein belongs to the interleukin-1 receptor family.

It is found in the cell membrane. The protein localises to the cytoplasm. It carries out the reaction NAD(+) + H2O = ADP-D-ribose + nicotinamide + H(+). In terms of biological role, may regulate secretion and presynaptic differentiation through inhibition of the activity of N-type voltage-gated calcium channel. During presynaptic differentiation may regulate both synaptic vesicle accumulation in axon terminals and subsequent axon terminal remodeling. The sequence is that of Interleukin-1 receptor accessory protein-like 1-B (il1rapl1b) from Danio rerio (Zebrafish).